A 158-amino-acid chain; its full sequence is Ribosome maturation factor RimP (158 aa).

It belongs to the RimP family.

Its subcellular location is the cytoplasm. Functionally, required for maturation of 30S ribosomal subunits. This is Ribosome maturation factor RimP from Lactobacillus gasseri (strain ATCC 33323 / DSM 20243 / BCRC 14619 / CIP 102991 / JCM 1131 / KCTC 3163 / NCIMB 11718 / NCTC 13722 / AM63).